The chain runs to 182 residues: Crossover junction endodeoxyribonuclease RuvC (182 aa).

Active-site residues include D7, E69, and D141. Residues D7, E69, and D141 each coordinate Mg(2+).

The protein belongs to the RuvC family. Homodimer which binds Holliday junction (HJ) DNA. The HJ becomes 2-fold symmetrical on binding to RuvC with unstacked arms; it has a different conformation from HJ DNA in complex with RuvA. In the full resolvosome a probable DNA-RuvA(4)-RuvB(12)-RuvC(2) complex forms which resolves the HJ. Mg(2+) is required as a cofactor.

The protein localises to the cytoplasm. It carries out the reaction Endonucleolytic cleavage at a junction such as a reciprocal single-stranded crossover between two homologous DNA duplexes (Holliday junction).. Its function is as follows. The RuvA-RuvB-RuvC complex processes Holliday junction (HJ) DNA during genetic recombination and DNA repair. Endonuclease that resolves HJ intermediates. Cleaves cruciform DNA by making single-stranded nicks across the HJ at symmetrical positions within the homologous arms, yielding a 5'-phosphate and a 3'-hydroxyl group; requires a central core of homology in the junction. The consensus cleavage sequence is 5'-(A/T)TT(C/G)-3'. Cleavage occurs on the 3'-side of the TT dinucleotide at the point of strand exchange. HJ branch migration catalyzed by RuvA-RuvB allows RuvC to scan DNA until it finds its consensus sequence, where it cleaves and resolves the cruciform DNA. This chain is Crossover junction endodeoxyribonuclease RuvC, found in Albidiferax ferrireducens (strain ATCC BAA-621 / DSM 15236 / T118) (Rhodoferax ferrireducens).